The primary structure comprises 740 residues: 1,4-alpha-glucan branching enzyme GlgB (740 aa).

Aspartate 419 serves as the catalytic Nucleophile. Glutamate 472 acts as the Proton donor in catalysis.

This sequence belongs to the glycosyl hydrolase 13 family. GlgB subfamily. As to quaternary structure, monomer.

It carries out the reaction Transfers a segment of a (1-&gt;4)-alpha-D-glucan chain to a primary hydroxy group in a similar glucan chain.. Its pathway is glycan biosynthesis; glycogen biosynthesis. Functionally, catalyzes the formation of the alpha-1,6-glucosidic linkages in glycogen by scission of a 1,4-alpha-linked oligosaccharide from growing alpha-1,4-glucan chains and the subsequent attachment of the oligosaccharide to the alpha-1,6 position. The polypeptide is 1,4-alpha-glucan branching enzyme GlgB (Thiobacillus denitrificans (strain ATCC 25259 / T1)).